Consider the following 196-residue polypeptide: Chorion protein S19 (196 aa).

A signal peptide spans 1 to 16 (MNTFATLAIFISACLA).

The protein belongs to the chorion protein S19 family.

The protein resides in the secreted. In terms of biological role, chorion membrane (egg shell) protein; plays a role in protecting the egg from the environment. The sequence is that of Chorion protein S19 (Cp19) from Drosophila grimshawi (Hawaiian fruit fly).